Reading from the N-terminus, the 115-residue chain is Ig heavy chain V region PJ14 (115 aa).

The first 19 residues, 1–19, serve as a signal peptide directing secretion; it reads MAVLALLFCLVTFPSCILS. In terms of domain architecture, Ig-like spans 20–115; it reads QVQLKESGPG…TDDTARYYCA (96 aa).

This is Ig heavy chain V region PJ14 from Mus musculus (Mouse).